Reading from the N-terminus, the 332-residue chain is Cysteine and histidine-rich domain-containing protein 1 (332 aa).

A2 carries the post-translational modification N-acetylalanine. The segment at 2–77 (ALLCYNRGCG…KPPEPVKPEV (76 aa)) is interaction with PPP5C. 6 residues coordinate Zn(2+): C5, C10, C24, H27, C42, and C43. 2 CHORD domains span residues 5–64 (CYNR…KGRH) and 157–216 (CKNG…TGKH). T47 bears the Phosphothreonine mark. A Phosphoserine modification is found at S51. Zn(2+)-binding residues include C59, H64, C157, C162, C176, H179, C194, C195, C211, and H216. Residues 62–82 (GRHNSEKPPEPVKPEVKTTEK) are disordered. Residues 64–82 (HNSEKPPEPVKPEVKTTEK) are compositionally biased toward basic and acidic residues. Positions 65 to 316 (NSEKPPEPVK…AEPMQWASLE (252 aa)) are interaction with HSP90AA1 and HSP90AB1. Residues 227-316 (VVPCRHDWHQ…AEPMQWASLE (90 aa)) enclose the CS domain.

As to quaternary structure, interacts with HSP90AA1, HSP90AB1, PPP5C, ROCK1 and ROCK2.

Functionally, regulates centrosome duplication, probably by inhibiting the kinase activity of ROCK2. Proposed to act as co-chaperone for HSP90. May play a role in the regulation of NOD1 via a HSP90 chaperone complex. In vitro, has intrinsic chaperone activity. This function may be achieved by inhibiting association of ROCK2 with NPM1. Plays a role in ensuring the localization of the tyrosine kinase receptor EGFR to the plasma membrane, and thus ensures the subsequent regulation of EGFR activity and EGF-induced actin cytoskeleton remodeling. Involved in stress response. Prevents tumorigenesis. In Bos taurus (Bovine), this protein is Cysteine and histidine-rich domain-containing protein 1 (CHORDC1).